A 264-amino-acid polypeptide reads, in one-letter code: Thymidylate synthase (264 aa).

R21 contributes to the dUMP binding site. Residue H51 participates in (6R)-5,10-methylene-5,6,7,8-tetrahydrofolate binding. DUMP is bound at residue 126-127 (RR). Catalysis depends on C146, which acts as the Nucleophile. DUMP is bound by residues 166–169 (RSAD), N177, and 207–209 (HIY). D169 contributes to the (6R)-5,10-methylene-5,6,7,8-tetrahydrofolate binding site. A263 contacts (6R)-5,10-methylene-5,6,7,8-tetrahydrofolate.

The protein belongs to the thymidylate synthase family. Bacterial-type ThyA subfamily. Homodimer.

The protein resides in the cytoplasm. The enzyme catalyses dUMP + (6R)-5,10-methylene-5,6,7,8-tetrahydrofolate = 7,8-dihydrofolate + dTMP. It functions in the pathway pyrimidine metabolism; dTTP biosynthesis. In terms of biological role, catalyzes the reductive methylation of 2'-deoxyuridine-5'-monophosphate (dUMP) to 2'-deoxythymidine-5'-monophosphate (dTMP) while utilizing 5,10-methylenetetrahydrofolate (mTHF) as the methyl donor and reductant in the reaction, yielding dihydrofolate (DHF) as a by-product. This enzymatic reaction provides an intracellular de novo source of dTMP, an essential precursor for DNA biosynthesis. This is Thymidylate synthase from Bacteroides thetaiotaomicron (strain ATCC 29148 / DSM 2079 / JCM 5827 / CCUG 10774 / NCTC 10582 / VPI-5482 / E50).